Consider the following 962-residue polypeptide: Leucine-rich repeat-containing G-protein coupled receptor 6 (962 aa).

The signal sequence occupies residues 1–16; sequence MLVVLLILHAVSCAHS. Residues 20-60 enclose the LRRNT domain; that stretch reads PGAAVPVKQCPSACQCEEDGILLLVDCSEQGLSSVPTDLSP. LRR repeat units lie at residues 38–58, 59–82, 83–106, 107–131, 133–154, 155–178, 179–202, 203–226, 228–250, 251–273, 275–297, 298–321, 322–344, 345–368, 370–390, 391–414, and 416–438; these read DGIL…PTDL, SPLT…AFRN, LHFL…MLQG, LYNL…PWEL, NLLS…TLSG, MRSL…ALND, LSSL…AFRN, LSNL…CFEG, HSLE…IRTL, AKLQ…AFVG, PLLQ…AFQF, LPKL…LKGT, TSLQ…LCHL, LPKL…YHCT, LQEI…TFQQ, LGSL…AFFS, and QSLI…GLTS. An N-linked (GlcNAc...) asparagine glycan is attached at Asn-71. Asn-202 carries N-linked (GlcNAc...) asparagine glycosylation. Transmembrane regions (helical) follow at residues 559–579, 590–610, 647–669, 679–699, 723–743, 766–786, and 801–821; these read GMWL…LTVF, FIIG…GTLA, SILF…RAYG, AAAV…LIGV, FMVA…GTYI, VAWL…LTFS, and SVVL…YLLF. A disulfide bond links Cys-633 and Cys-708.

Belongs to the G-protein coupled receptor 1 family.

It is found in the cell membrane. In terms of biological role, receptor for R-spondins that potentiates the canonical Wnt signaling pathway. Upon binding to R-spondins (rspo1, rspo2, rspo3 or rspo4), associates with phosphorylated lrp6 and frizzled receptors that are activated by extracellular Wnt receptors, triggering the canonical Wnt signaling pathway to increase expression of target genes. In contrast to classical G-protein coupled receptors, does not activate heterotrimeric G-proteins to transduce the signal. The chain is Leucine-rich repeat-containing G-protein coupled receptor 6 (lgr6) from Danio rerio (Zebrafish).